A 327-amino-acid chain; its full sequence is MRALPGLLEARARTPRLLLLQCLLAAARPSSADGSAPDSPFTSPPLREEIMANNFSLESHNISLTEHSSMPVEKNITLERPSNVNLTCQFTTSGDLNAVNVTWKKDGEQLENNYLVSATGSTLYTQYRFTIINSKQMGSYSCFFREEKEQRGTFNFKVPELHGKNKPLISYVGDSTVLTCKCQNCFPLNWTWYSSNGSVKVPVGVQMNKYVINGTYANETKLKITQLLEEDGESYWCRALFQLGESEEHIELVVLSYLVPLKPFLVIVAEVILLVATILLCEKYTQKKKKHSDEGKEFEQIEQLKSDDSNGIENNVPRHRKNESLGQ.

An N-terminal signal peptide occupies residues 1–32 (MRALPGLLEARARTPRLLLLQCLLAAARPSSA). Topologically, residues 33–260 (DGSAPDSPFT…ELVVLSYLVP (228 aa)) are extracellular. N-linked (GlcNAc...) asparagine glycosylation is found at Asn54, Asn61, Asn75, Asn85, Asn100, Asn189, Asn196, Asn213, and Asn218. Ig-like V-type domains follow at residues 71–158 (PVEK…NFKV) and 159–253 (PELH…IELV). Intrachain disulfides connect Cys88/Cys142 and Cys180/Cys237. Residues 261–281 (LKPFLVIVAEVILLVATILLC) form a helical membrane-spanning segment. Over 282–327 (EKYTQKKKKHSDEGKEFEQIEQLKSDDSNGIENNVPRHRKNESLGQ) the chain is Cytoplasmic. A disordered region spans residues 287 to 327 (KKKKHSDEGKEFEQIEQLKSDDSNGIENNVPRHRKNESLGQ). The span at 291-308 (HSDEGKEFEQIEQLKSDD) shows a compositional bias: basic and acidic residues. Ser309 is modified (phosphoserine).

As to quaternary structure, interacts with SLC16A1, SLC16A6 and SLC16A7.

Its subcellular location is the cell membrane. It is found in the synapse. In terms of biological role, plays a role in the outgrowth of motoneurons and in the formation of neuromuscular junctions. Following muscle denervation, promotes nerve terminal sprouting and the formation of additional acetylcholine receptor clusters at synaptic sites without affecting terminal Schwann cell number or morphology. Delays the retraction of terminal sprouts following re-innervation of denervated endplates. May play a role in targeting the monocarboxylate transporters SLC16A1, SLC16A6 and SLC16A7 to the cell membrane. The chain is Embigin (EMB) from Homo sapiens (Human).